The primary structure comprises 413 residues: Multidrug resistance protein MdtA (413 aa).

Residues Met1 to Ala20 form the signal peptide. Disordered regions lie at residues Ser31 to Pro57 and Glu391 to Ala413. Residues Ala397–Ala413 are compositionally biased toward basic and acidic residues.

The protein belongs to the membrane fusion protein (MFP) (TC 8.A.1) family. In terms of assembly, part of a tripartite efflux system composed of MdtA, MdtB and MdtC.

It localises to the cell inner membrane. This chain is Multidrug resistance protein MdtA, found in Salmonella paratyphi C (strain RKS4594).